The chain runs to 419 residues: UDP-N-acetylglucosamine 1-carboxyvinyltransferase 2 (419 aa).

Position 22–23 (22–23) interacts with phosphoenolpyruvate; the sequence is KN. Residue Arg92 coordinates UDP-N-acetyl-alpha-D-glucosamine. Cys116 acts as the Proton donor in catalysis. Cys116 carries the post-translational modification 2-(S-cysteinyl)pyruvic acid O-phosphothioketal. UDP-N-acetyl-alpha-D-glucosamine is bound by residues 121 to 125, Asp306, and Ile328; that span reads RPIDL.

This sequence belongs to the EPSP synthase family. MurA subfamily.

It localises to the cytoplasm. It carries out the reaction phosphoenolpyruvate + UDP-N-acetyl-alpha-D-glucosamine = UDP-N-acetyl-3-O-(1-carboxyvinyl)-alpha-D-glucosamine + phosphate. It functions in the pathway cell wall biogenesis; peptidoglycan biosynthesis. Cell wall formation. Adds enolpyruvyl to UDP-N-acetylglucosamine. The protein is UDP-N-acetylglucosamine 1-carboxyvinyltransferase 2 of Streptococcus pneumoniae (strain ATCC BAA-255 / R6).